Reading from the N-terminus, the 245-residue chain is Biosynthetic peptidoglycan transglycosylase (245 aa).

The chain crosses the membrane as a helical span at residues 20–42; that stretch reads VYAGSVFAGAWLATQLFYLAQIA.

The protein belongs to the glycosyltransferase 51 family.

It is found in the cell inner membrane. The enzyme catalyses [GlcNAc-(1-&gt;4)-Mur2Ac(oyl-L-Ala-gamma-D-Glu-L-Lys-D-Ala-D-Ala)](n)-di-trans,octa-cis-undecaprenyl diphosphate + beta-D-GlcNAc-(1-&gt;4)-Mur2Ac(oyl-L-Ala-gamma-D-Glu-L-Lys-D-Ala-D-Ala)-di-trans,octa-cis-undecaprenyl diphosphate = [GlcNAc-(1-&gt;4)-Mur2Ac(oyl-L-Ala-gamma-D-Glu-L-Lys-D-Ala-D-Ala)](n+1)-di-trans,octa-cis-undecaprenyl diphosphate + di-trans,octa-cis-undecaprenyl diphosphate + H(+). It participates in cell wall biogenesis; peptidoglycan biosynthesis. Functionally, peptidoglycan polymerase that catalyzes glycan chain elongation from lipid-linked precursors. The polypeptide is Biosynthetic peptidoglycan transglycosylase (Burkholderia cenocepacia (strain HI2424)).